Here is a 202-residue protein sequence, read N- to C-terminus: Large ribosomal subunit protein uL4 (202 aa).

The interval 40–71 (GRQGSKAQKTRSQVSGGGKKPWRQKGSGRARA) is disordered. Residues 44–53 (SKAQKTRSQV) are compositionally biased toward polar residues.

The protein belongs to the universal ribosomal protein uL4 family. In terms of assembly, part of the 50S ribosomal subunit.

In terms of biological role, one of the primary rRNA binding proteins, this protein initially binds near the 5'-end of the 23S rRNA. It is important during the early stages of 50S assembly. It makes multiple contacts with different domains of the 23S rRNA in the assembled 50S subunit and ribosome. Its function is as follows. Forms part of the polypeptide exit tunnel. In Hahella chejuensis (strain KCTC 2396), this protein is Large ribosomal subunit protein uL4.